Reading from the N-terminus, the 573-residue chain is N(2)-(2-carboxyethyl)arginine synthase (573 aa).

Residues Tyr-271 and Asp-301 each contribute to the substrate site. 410–413 is a binding site for thiamine diphosphate; the sequence is IGFF. 414–415 provides a ligand contact to substrate; it reads RH. 436–438 serves as a coordination point for thiamine diphosphate; it reads SSF. Asp-463 is a binding site for Mg(2+). Residues 464 to 465, 490 to 495, and Tyr-561 each bind thiamine diphosphate; these read GG and NDTNGL. Mg(2+)-binding residues include Asn-490 and Thr-492. Residue Leu-571 participates in substrate binding.

Homotetramer; dimer of dimers. The cofactor is Mg(2+). Thiamine diphosphate is required as a cofactor.

It catalyses the reaction D-glyceraldehyde 3-phosphate + L-arginine = N(2)-(2-carboxyethyl)-L-arginine + phosphate + H(+). In terms of biological role, involved in the biosynthesis of the beta-lactamase inhibitor, clavulanic acid. Catalyzes the thiamine diphosphate (ThDP) dependent condensation of D-glyceraldehyde-3-phosphate (D-G3P) with L-arginine to yield the beta-amino acid, N2-(2-carboxyethyl)arginine (CEA) via a beta-elimination resulting in the formation of an enol which undergoes a second elimination to generate the alpha,beta-unsaturated acryloyl-ThDP. In Streptomyces clavuligerus, this protein is N(2)-(2-carboxyethyl)arginine synthase.